The chain runs to 233 residues: MIEHLGINTPYFGILVSLIPFVIATYFYKKTNGFFLLAPLFVSMVAGIAFLKLTGISYENYKIGGDIINFFLEPATICFAIPLYRKREVLKRYWLQIFGGIAVGTIIALLLIYLVAITFQFGNQIIASMLPQAATTAIALPVSDGIGGVKELTSLAVILNAVVISALGAKIVKLFKISNPIARGLALGTSGHTLGVAAAKELGETEESMGSIAVVIVGVIVVAVVPILAPILL.

The next 6 membrane-spanning stretches (helical) occupy residues 5 to 25, 33 to 53, 63 to 83, 97 to 117, 152 to 172, and 212 to 232; these read LGIN…VIAT, GFFL…FLKL, IGGD…AIPL, IFGG…LVAI, LTSL…AKIV, and IAVV…APIL.

It belongs to the CidB/LrgB family. LrgB subfamily.

It is found in the cell membrane. In terms of biological role, inhibits the expression or activity of extracellular murein hydrolases by interacting, possibly with LrgA, with the holin-like proteins CidA and/or CidB. The LrgAB and CidAB proteins may affect the proton motive force of the membrane. May be involved in programmed cell death (PCD), possibly triggering PCD in response to antibiotics and environmental stresses. This Staphylococcus epidermidis (strain ATCC 12228 / FDA PCI 1200) protein is Antiholin-like protein LrgB.